Here is a 168-residue protein sequence, read N- to C-terminus: Endoribonuclease YbeY (168 aa).

Residues histidine 123, histidine 127, and histidine 133 each contribute to the Zn(2+) site.

The protein belongs to the endoribonuclease YbeY family. Zn(2+) serves as cofactor.

It is found in the cytoplasm. Its function is as follows. Single strand-specific metallo-endoribonuclease involved in late-stage 70S ribosome quality control and in maturation of the 3' terminus of the 16S rRNA. The polypeptide is Endoribonuclease YbeY (Francisella tularensis subsp. tularensis (strain SCHU S4 / Schu 4)).